We begin with the raw amino-acid sequence, 374 residues long: Serine/threonine-protein kinase-transforming protein mos (374 aa).

One can recognise a Protein kinase domain in the interval 94 to 370 (VCLMHRLGSG…LLQRDLKAFR (277 aa)). ATP-binding positions include 100–108 (LGSGGFGSV) and Lys121. The active-site Proton acceptor is the Asp229.

It belongs to the protein kinase superfamily. Ser/Thr protein kinase family.

The catalysed reaction is L-seryl-[protein] + ATP = O-phospho-L-seryl-[protein] + ADP + H(+). The enzyme catalyses L-threonyl-[protein] + ATP = O-phospho-L-threonyl-[protein] + ADP + H(+). The chain is Serine/threonine-protein kinase-transforming protein mos (V-MOS) from Mus musculus (Mouse).